A 474-amino-acid chain; its full sequence is ATP synthase subunit beta (474 aa).

152 to 159 (GGAGVGKT) serves as a coordination point for ATP.

This sequence belongs to the ATPase alpha/beta chains family. F-type ATPases have 2 components, CF(1) - the catalytic core - and CF(0) - the membrane proton channel. CF(1) has five subunits: alpha(3), beta(3), gamma(1), delta(1), epsilon(1). CF(0) has four main subunits: a(1), b(1), b'(1) and c(9-12).

It localises to the cell inner membrane. The enzyme catalyses ATP + H2O + 4 H(+)(in) = ADP + phosphate + 5 H(+)(out). In terms of biological role, produces ATP from ADP in the presence of a proton gradient across the membrane. The catalytic sites are hosted primarily by the beta subunits. This is ATP synthase subunit beta from Rhodospirillum rubrum (strain ATCC 11170 / ATH 1.1.1 / DSM 467 / LMG 4362 / NCIMB 8255 / S1).